The following is a 163-amino-acid chain: NADH-quinone oxidoreductase subunit I (163 aa).

2 4Fe-4S ferredoxin-type domains span residues 53–83 (LRRY…IEAG) and 94–123 (VRYD…EGPN). 8 residues coordinate [4Fe-4S] cluster: cysteine 63, cysteine 66, cysteine 69, cysteine 73, cysteine 103, cysteine 106, cysteine 109, and cysteine 113.

It belongs to the complex I 23 kDa subunit family. As to quaternary structure, NDH-1 is composed of 14 different subunits. Subunits NuoA, H, J, K, L, M, N constitute the membrane sector of the complex. [4Fe-4S] cluster serves as cofactor.

The protein resides in the cell inner membrane. The catalysed reaction is a quinone + NADH + 5 H(+)(in) = a quinol + NAD(+) + 4 H(+)(out). NDH-1 shuttles electrons from NADH, via FMN and iron-sulfur (Fe-S) centers, to quinones in the respiratory chain. The immediate electron acceptor for the enzyme in this species is believed to be ubiquinone. Couples the redox reaction to proton translocation (for every two electrons transferred, four hydrogen ions are translocated across the cytoplasmic membrane), and thus conserves the redox energy in a proton gradient. In Chelativorans sp. (strain BNC1), this protein is NADH-quinone oxidoreductase subunit I.